The sequence spans 203 residues: ADP-ribosylation factor-like protein 6-interacting protein 1 (203 aa).

Residues 1-41 (MAEGDNRSSNLLAAETASLEEQLQGWGEVMLMADKVLRWER) are Cytoplasmic-facing. Residues 42–62 (AWFPPAIMGVVSLVFLIIYYL) form a helical membrane-spanning segment. Residues 63–65 (DPS) are Lumenal-facing. The chain crosses the membrane as a helical span at residues 66-86 (VLSGVSCFVMFLCLADYLVPI). Over 87–133 (LAPRIFGSNKWTTEQQQRFHEICSNLVKTRRRAVGWWKRLFTLKEEK) the chain is Cytoplasmic. A helical transmembrane segment spans residues 134–175 (PKMYFMTMIVSLAAVAWVGQQVHNLLLTYLIVTSLLLLPGLN). Over 176–203 (QHGIISKYIGMAKREINKLLKQKEKKNE) the chain is Lumenal.

It belongs to the ARL6ip family. As to quaternary structure, homooligomer. Heterodimer with ARL6IP5. Interacts with ATL1, TMEM33 and ARL6.

Its subcellular location is the endomembrane system. It is found in the endoplasmic reticulum membrane. It localises to the endoplasmic reticulum. Its function is as follows. Positively regulates SLC1A1/EAAC1-mediated glutamate transport by increasing its affinity for glutamate in a PKC activity-dependent manner. Promotes the catalytic efficiency of SLC1A1/EAAC1 probably by reducing its interaction with ARL6IP5, a negative regulator of SLC1A1/EAAC1-mediated glutamate transport. Plays a role in the formation and stabilization of endoplasmic reticulum tubules. Negatively regulates apoptosis, possibly by modulating the activity of caspase-9 (CASP9). Inhibits cleavage of CASP9-dependent substrates and downstream markers of apoptosis but not CASP9 itself. May be involved in protein transport, membrane trafficking, or cell signaling during hematopoietic maturation. This is ADP-ribosylation factor-like protein 6-interacting protein 1 (ARL6IP1) from Pongo abelii (Sumatran orangutan).